The chain runs to 89 residues: Protein S100-A8 (89 aa).

2 consecutive EF-hand domains span residues 13–48 and 46–81; these read IDVYHNYSNIQGNHHALYKNDFKKMVTTECPQFVQN and VQNINIENLFRELDINSDNAINFEEFLAMVIKVGVA. Zn(2+)-binding residues include His-17 and His-27. Asp-33 lines the Ca(2+) pocket. The residue at position 42 (Cys-42) is an S-nitrosocysteine. Ca(2+) is bound by residues Asp-59, Asn-61, Asp-63, and Glu-70. His-83 lines the Zn(2+) pocket.

The protein belongs to the S-100 family. In terms of assembly, homodimer. Preferentially exists as a heterodimer or heterotetramer with S100A9 known as calprotectin (S100A8/A9). Calprotectin (S100A8/9) interacts with CEACAM3 and tubulin filaments in a calcium-dependent manner. Heterotetrameric calprotectin (S100A8/A9) interacts with ANXA6 and associates with tubulin filaments in activated monocytes. S100A8 and calprotectin (S100A8/9) interact with NCF2/P67PHOX, RAC1 and RAC2. Calprotectin (S100A8/9) interacts with CYBA and CYBB. S100A8 interacts with AGER, ATP2A2 and with the heterodimeric complex formed by TLR4 and LY96. Calprotectin (S100A8/9) interacts with NOS2 to form the iNOS-S100A8/A9 transnitrosylase complex. Calprotectin (S100A8/9) interacts with CD69.

It is found in the secreted. It localises to the cytoplasm. The protein localises to the cytoskeleton. Its subcellular location is the cell membrane. Calprotectin (S100A8/A9) activity on TLR4 signaling is inhibited by paquinimod. Functionally, S100A8 is a calcium- and zinc-binding protein which plays a prominent role in the regulation of inflammatory processes and immune response. It can induce neutrophil chemotaxis and adhesion. Predominantly found as calprotectin (S100A8/A9) which has a wide plethora of intra- and extracellular functions. The intracellular functions include: facilitating leukocyte arachidonic acid trafficking and metabolism, modulation of the tubulin-dependent cytoskeleton during migration of phagocytes and activation of the neutrophilic NADPH-oxidase. Also participates in regulatory T-cell differentiation together with CD69. Activates NADPH-oxidase by facilitating the enzyme complex assembly at the cell membrane, transferring arachidonic acid, an essential cofactor, to the enzyme complex and S100A8 contributes to the enzyme assembly by directly binding to NCF2/P67PHOX. The extracellular functions involve pro-inflammatory, antimicrobial, oxidant-scavenging and apoptosis-inducing activities. Its pro-inflammatory activity includes recruitment of leukocytes, promotion of cytokine and chemokine production, and regulation of leukocyte adhesion and migration. Acts as an alarmin or a danger associated molecular pattern (DAMP) molecule and stimulates innate immune cells via binding to pattern recognition receptors such as Toll-like receptor 4 (TLR4) and receptor for advanced glycation endproducts (AGER). Binding to TLR4 and AGER activates the MAP-kinase and NF-kappa-B signaling pathways resulting in the amplification of the pro-inflammatory cascade. Has antimicrobial activity towards bacteria and fungi and exerts its antimicrobial activity probably via chelation of Zn(2+) which is essential for microbial growth. Can induce cell death via autophagy and apoptosis and this occurs through the cross-talk of mitochondria and lysosomes via reactive oxygen species (ROS) and the process involves BNIP3. Can regulate neutrophil number and apoptosis by an anti-apoptotic effect; regulates cell survival via ITGAM/ITGB and TLR4 and a signaling mechanism involving MEK-ERK. Its role as an oxidant scavenger has a protective role in preventing exaggerated tissue damage by scavenging oxidants. The iNOS-S100A8/A9 transnitrosylase complex is proposed to direct selective inflammatory stimulus-dependent S-nitrosylation of multiple targets such as GAPDH, ANXA5, EZR, MSN and VIM by recognizing a [IL]-x-C-x-x-[DE] motif; S100A8 seems to contribute to S-nitrosylation site selectivity. (Microbial infection) Upon infection by murine coronavirus (MHV-A59), induces expansion of aberrant immature neutrophils in a TLR4-dependent manner. This chain is Protein S100-A8, found in Mus musculus (Mouse).